The sequence spans 162 residues: Caveolin-2 (162 aa).

Over 1–86 (MGLETEKADV…FEISKYVMYK (86 aa)) the chain is Cytoplasmic. Phosphotyrosine; by SRC is present on tyrosine 19. Phosphoserine is present on residues serine 20 and serine 23. A Phosphotyrosine; by SRC modification is found at tyrosine 27. Position 36 is a phosphoserine (serine 36). An intramembrane region (helical) is located at residues 87 to 107 (FLTVFLAIPLAFIAGILFATL). Over 108–162 (SCLHIWILMPFVKTCLMVLPSVQTIWKSVTDVIIAPLCTSVGRCFSSVSLQLSQD) the chain is Cytoplasmic.

The protein belongs to the caveolin family. Monomer or homodimer. Interacts with CAV1; the interaction forms a stable heterooligomeric complex that is required for targeting to lipid rafts and for caveolae formation. Tyrosine phosphorylated forms do not form heterooligomers with the Tyr-19-phosphorylated form existing as a monomer or dimer, and the Tyr-27-form as a monomer only. Interacts (tyrosine phosphorylated form) with the SH2 domain-containing proteins, RASA1, NCK1 and SRC. Interacts (tyrosine phosphorylated form) with INSR, the interaction (Tyr-27-phosphorylated form) is increased on insulin stimulation. Interacts (Tyr-19 phosphorylated form) with MAPK1 (phosphorylated form); the interaction, promoted by insulin, leads to nuclear location and MAPK1 activation. Interacts with STAT3; the interaction is increased on insulin-induced tyrosine phosphorylation leading to STAT activation. In terms of processing, phosphorylated on serine and tyrosine residues. CAV1 promotes phosphorylation on Ser-23 which then targets the complex to the plasma membrane, lipid rafts and caveolae. Phosphorylation on Ser-36 appears to modulate mitosis in endothelial cells. Phosphorylation on both Tyr-19 and Tyr-27 is required for insulin-induced 'Ser-727' phosphorylation of STAT3 and its activation. Phosphorylation on Tyr-19 is required for insulin-induced phosphorylation of MAPK1 and DNA binding of STAT3. Tyrosine phosphorylation is induced by both EGF and insulin (By. similarity).

It is found in the nucleus. The protein resides in the cytoplasm. It localises to the golgi apparatus membrane. Its subcellular location is the cell membrane. The protein localises to the membrane. It is found in the caveola. In terms of biological role, may act as a scaffolding protein within caveolar membranes. Interacts directly with G-protein alpha subunits and can functionally regulate their activity. Acts as an accessory protein in conjunction with CAV1 in targeting to lipid rafts and driving caveolae formation. The Ser-36 phosphorylated form has a role in modulating mitosis in endothelial cells. Positive regulator of cellular mitogenesis of the MAPK signaling pathway. Required for the insulin-stimulated nuclear translocation and activation of MAPK1 and STAT3, and the subsequent regulation of cell cycle progression. The chain is Caveolin-2 (CAV2) from Gorilla gorilla gorilla (Western lowland gorilla).